A 345-amino-acid polypeptide reads, in one-letter code: NADPH dehydrogenase (345 aa).

Residue 23 to 26 coordinates FMN; the sequence is SPMC. Tyr-28 contacts substrate. Residues Ala-60 and Gln-102 each coordinate FMN. 164–167 contributes to the substrate binding site; sequence HGAH. FMN contacts are provided by residues Arg-215 and 307–308; that span reads GR.

Belongs to the NADH:flavin oxidoreductase/NADH oxidase family. NamA subfamily. Homotetramer. The cofactor is FMN.

It carries out the reaction A + NADPH + H(+) = AH2 + NADP(+). Catalyzes the reduction of the double bond of an array of alpha,beta-unsaturated aldehydes and ketones. It also reduces the nitro group of nitroester and nitroaromatic compounds. It could have a role in detoxification processes. This chain is NADPH dehydrogenase, found in Bacillus cereus (strain ATCC 10987 / NRS 248).